The following is a 923-amino-acid chain: Glucosidase 2 subunit alpha (923 aa).

An N-terminal signal peptide occupies residues 1 to 25 (MRYHGICWFIFQAAIIFAIFGSCQG). N-linked (GlcNAc...) asparagine glycosylation is present at N262. The Nucleophile role is filled by D524. Residue E527 is part of the active site. N563 carries an N-linked (GlcNAc...) asparagine glycan. The active-site Proton donor is the D600. N822 carries an N-linked (GlcNAc...) asparagine glycan.

The protein belongs to the glycosyl hydrolase 31 family. Heterodimer of a catalytic subunit alpha (gls2) and a subunit beta (gtb1).

The protein resides in the endoplasmic reticulum. It carries out the reaction N(4)-(alpha-D-Glc-(1-&gt;3)-alpha-D-Man-(1-&gt;2)-alpha-D-Man-(1-&gt;2)-alpha-D-Man-(1-&gt;3)-[alpha-D-Man-(1-&gt;2)-alpha-D-Man-(1-&gt;3)-[alpha-D-Man-(1-&gt;2)-alpha-D-Man-(1-&gt;6)]-alpha-D-Man-(1-&gt;6)]-beta-D-Man-(1-&gt;4)-beta-D-GlcNAc-(1-&gt;4)-beta-D-GlcNAc)-L-asparaginyl-[protein] + H2O = N(4)-(alpha-D-Man-(1-&gt;2)-alpha-D-Man-(1-&gt;2)-alpha-D-Man-(1-&gt;3)-[alpha-D-Man-(1-&gt;2)-alpha-D-Man-(1-&gt;3)-[alpha-D-Man-(1-&gt;2)-alpha-D-Man-(1-&gt;6)]-alpha-D-Man-(1-&gt;6)]-beta-D-Man-(1-&gt;4)-beta-D-GlcNAc-(1-&gt;4)-beta-D-GlcNAc)-L-asparaginyl-[protein] (N-glucan mannose isomer 9A1,2,3B1,2,3) + beta-D-glucose. It catalyses the reaction N(4)-(alpha-D-Glc-(1-&gt;3)-alpha-D-Glc-(1-&gt;3)-alpha-D-Man-(1-&gt;2)-alpha-D-Man-(1-&gt;2)-alpha-D-Man-(1-&gt;3)-[alpha-D-Man-(1-&gt;2)-alpha-D-Man-(1-&gt;3)-[alpha-D-Man-(1-&gt;2)-alpha-D-Man-(1-&gt;6)]-alpha-D-Man-(1-&gt;6)]-beta-D-Man-(1-&gt;4)-beta-D-GlcNAc-(1-&gt;4)-beta-D-GlcNAc)-L-asparaginyl-[protein] + H2O = N(4)-(alpha-D-Glc-(1-&gt;3)-alpha-D-Man-(1-&gt;2)-alpha-D-Man-(1-&gt;2)-alpha-D-Man-(1-&gt;3)-[alpha-D-Man-(1-&gt;2)-alpha-D-Man-(1-&gt;3)-[alpha-D-Man-(1-&gt;2)-alpha-D-Man-(1-&gt;6)]-alpha-D-Man-(1-&gt;6)]-beta-D-Man-(1-&gt;4)-beta-D-GlcNAc-(1-&gt;4)-beta-D-GlcNAc)-L-asparaginyl-[protein] + beta-D-glucose. Its pathway is glycan metabolism; N-glycan metabolism. Functionally, catalytic subunit of glucosidase 2, which cleaves sequentially the 2 innermost alpha-1,3-linked glucose residues from the Glc(2)Man(9)GlcNAc(2) oligosaccharide precursor of immature glycoproteins. The chain is Glucosidase 2 subunit alpha from Schizosaccharomyces pombe (strain 972 / ATCC 24843) (Fission yeast).